Reading from the N-terminus, the 493-residue chain is Monodehydroascorbate reductase, chloroplastic/mitochondrial (493 aa).

The transit peptide at 1-51 (MSAVRRVMALASTTLPTKSGLSLWCPSSPSLARRFPARFSPIGSRIASRSL) directs the protein to the chloroplast and mitochondrion. Residues 68 to 71 (GGNA), Glu95, Arg102, Lys107, and 201 to 202 (RE) each bind FAD. Residues 224 to 230 (GGYIGME), Glu248, Arg254, and Gly313 contribute to the NAD(+) site. 226-230 (YIGME) is an NADP(+) binding site. 2 residues coordinate NADP(+): Arg254 and Gly313. Asp351 contributes to the FAD binding site. NAD(+) is bound at residue 367 to 368 (EH). 367-368 (EH) serves as a coordination point for NADP(+). Val369 is an FAD binding site. An L-ascorbate-binding site is contributed by Arg373. Tyr398 is an FAD binding site. Position 398 (Tyr398) interacts with NAD(+). Tyr398 is a binding site for NADP(+). Position 400 (Arg400) interacts with L-ascorbate.

Belongs to the FAD-dependent oxidoreductase family. Interacts in vitro with TRXy. The cofactor is FAD.

The protein resides in the plastid. It localises to the chloroplast. Its subcellular location is the mitochondrion. It catalyses the reaction 2 monodehydro-L-ascorbate radical + NADH + H(+) = 2 L-ascorbate + NAD(+). The enzyme catalyses 2,4,6-trinitrotoluene + NADH = 2,4,6-trinitrotoluene radical + e(-) + NAD(+). Its activity is regulated as follows. Redox regulation of the activity by thioredoxin TRXy1. Its function is as follows. Catalyzes the conversion of monodehydroascorbate (MDA) to ascorbate, oxidizing NADH in the process. Mediates phytotoxicity of 2,4,6-trinitrotoluene (TNT), an explosive and environmental pollutant, by reducing TNT and forming a nitro radical that spontaneously reacts with atmospheric oxygen, generating reactive superoxide. Can also use 1-chloro-2,4-dinitrobenzene (CDNB) as substrate, but not 1-chloro-4-nitrobenzene (CNB). The chain is Monodehydroascorbate reductase, chloroplastic/mitochondrial from Arabidopsis thaliana (Mouse-ear cress).